We begin with the raw amino-acid sequence, 705 residues long: Catalase C (705 aa).

The disordered stretch occupies residues 1 to 31; the sequence is MAKKPSAPNNTKPATIHDQKATRGNGGELHQ. Catalysis depends on residues His88 and Asn161. Residue Tyr375 participates in heme binding.

The protein belongs to the catalase family. HPII subfamily. The cofactor is heme.

It catalyses the reaction 2 H2O2 = O2 + 2 H2O. In terms of biological role, decomposes hydrogen peroxide into water and oxygen; serves to protect cells from the toxic effects of hydrogen peroxide. Could protect cells in nodules which have a high potential to produce hydrogen peroxide because of the strong reducing conditions required for nitrogen fixation and the action of several proteins. This is Catalase C (katE) from Rhizobium meliloti (strain 1021) (Ensifer meliloti).